A 939-amino-acid chain; its full sequence is Valine--tRNA ligase (939 aa).

Positions 47 to 57 (PNVTGILHMGH) match the 'HIGH' region motif. The short motif at 563–567 (KLSKS) is the 'KMSKS' region element. Lys-566 provides a ligand contact to ATP. A coiled-coil region spans residues 874–939 (EHLAKERVRL…QSILDKLASL (66 aa)).

The protein belongs to the class-I aminoacyl-tRNA synthetase family. ValS type 1 subfamily. Monomer.

It is found in the cytoplasm. The enzyme catalyses tRNA(Val) + L-valine + ATP = L-valyl-tRNA(Val) + AMP + diphosphate. In terms of biological role, catalyzes the attachment of valine to tRNA(Val). As ValRS can inadvertently accommodate and process structurally similar amino acids such as threonine, to avoid such errors, it has a 'posttransfer' editing activity that hydrolyzes mischarged Thr-tRNA(Val) in a tRNA-dependent manner. In Chlamydia trachomatis serovar A (strain ATCC VR-571B / DSM 19440 / HAR-13), this protein is Valine--tRNA ligase.